The chain runs to 567 residues: Potassium-transporting ATPase potassium-binding subunit (567 aa).

A run of 12 helical transmembrane segments spans residues 5 to 25, 64 to 84, 136 to 156, 179 to 199, 254 to 274, 285 to 305, 328 to 350, 375 to 395, 421 to 441, 459 to 481, 486 to 506, and 529 to 549; these read GWLQILIYIGILLLLVKPLGG, TTYSISMLLFSLAGFLMLYFL, GFTVQNFVSAATGIALAIALI, LYVLLPACIVMTLVFVYLGVP, ISNLIQMLAIFAIGAALTNVF, WAILAAMGTLFIAGVIVTYWA, VRFGITMSSLFAVITTAASCGAV, IVGGVGAGFYGILMFVIIAIF, MLAVLCLPAGMLIFTAISVVL, ILYAYSSAAANNGSAFAGLSANT, ITLGVVMLIGRFLVIVPALAI, and LFVGLLVGTILIVGGLTFFPA.

It belongs to the KdpA family. As to quaternary structure, the system is composed of three essential subunits: KdpA, KdpB and KdpC.

It is found in the cell inner membrane. Its function is as follows. Part of the high-affinity ATP-driven potassium transport (or Kdp) system, which catalyzes the hydrolysis of ATP coupled with the electrogenic transport of potassium into the cytoplasm. This subunit binds the periplasmic potassium ions and delivers the ions to the membrane domain of KdpB through an intramembrane tunnel. The protein is Potassium-transporting ATPase potassium-binding subunit of Rhizobium rhizogenes (strain K84 / ATCC BAA-868) (Agrobacterium radiobacter).